A 254-amino-acid chain; its full sequence is L-rhamnose 1-dehydrogenase (NAD(P)(+)) (254 aa).

Positions 13, 15, 18, 64, 65, and 91 each coordinate NADP(+). Serine 144 functions as the Proton donor in the catalytic mechanism. 4 residues coordinate beta-L-rhamnose: serine 144, serine 146, glutamine 154, and tyrosine 157. Residues tyrosine 157 and lysine 161 each coordinate NADP(+). Residue tyrosine 157 is the Proton acceptor of the active site. Lysine 161 functions as the Lowers pKa of active site Tyr in the catalytic mechanism. Threonine 189 contacts beta-L-rhamnose. Isoleucine 190 contacts NADP(+). Asparagine 195 is a binding site for beta-L-rhamnose.

Belongs to the short-chain dehydrogenases/reductases (SDR) family.

The catalysed reaction is L-rhamnofuranose + NAD(+) = L-rhamnono-1,4-lactone + NADH + H(+). The enzyme catalyses L-rhamnofuranose + NADP(+) = L-rhamnono-1,4-lactone + NADPH + H(+). The protein operates within carbohydrate degradation; L-rhamnose degradation. NAD(P)-dependent dehydrogenase that catalyzes the oxidation of L-rhamnose to L-rhamnono-1,4-lactone. Also shows high activity with L-lyxose and low activity with L-mannose. Can utilize either NAD(+) or NADP(+), with a slight preference for NADP(+). Catalyzes the first step in an alternative pathway for rhamnose utilization that does not involve phosphorylated intermediates. The protein is L-rhamnose 1-dehydrogenase (NAD(P)(+)) of Sphingomonas sp. (strain SKA58).